Here is a 207-residue protein sequence, read N- to C-terminus: Large ribosomal subunit protein bL17m (207 aa).

Over residues 173 to 200 (EKESEHARLKEDHEDEKTVKKDWKRGDP) the composition is skewed to basic and acidic residues. A disordered region spans residues 173-207 (EKESEHARLKEDHEDEKTVKKDWKRGDPIPRPTYI).

This sequence belongs to the bacterial ribosomal protein bL17 family. Component of the mitochondrial large ribosomal subunit (mt-LSU). Mature yeast 74S mitochondrial ribosomes consist of a small (37S) and a large (54S) subunit. The 37S small subunit contains a 15S ribosomal RNA (15S mt-rRNA) and at least 32 different proteins. The 54S large subunit contains a 21S rRNA (21S mt-rRNA) and at least 45 different proteins.

Its subcellular location is the mitochondrion. Component of the mitochondrial ribosome (mitoribosome), a dedicated translation machinery responsible for the synthesis of mitochondrial genome-encoded proteins, including at least some of the essential transmembrane subunits of the mitochondrial respiratory chain. The mitoribosomes are attached to the mitochondrial inner membrane and translation products are cotranslationally integrated into the membrane. This chain is Large ribosomal subunit protein bL17m (mrpl8), found in Schizosaccharomyces pombe (strain 972 / ATCC 24843) (Fission yeast).